We begin with the raw amino-acid sequence, 528 residues long: 4-chlorobenzoate--CoA ligase (528 aa).

Residues 161–169 (TSGTTGLPK), 300–305 (NIYGTT), and Asn-409 each bind ATP.

This sequence belongs to the ATP-dependent AMP-binding enzyme family. As to quaternary structure, homodimer. The cofactor is Mg(2+).

The catalysed reaction is 4-chlorobenzoate + ATP + CoA = 4-chlorobenzoyl-CoA + AMP + diphosphate. It participates in xenobiotic degradation; 4-chlorobenzoate degradation; 4-hydroxybenzoate from 4-chlorobenzoate: step 2/3. With respect to regulation, unaffected by 5,5'-dithiobis-(2-nitrobenzoic acid), 4-chloromercuribenzoate and sodium azide. Inhibited by Cu(2+), Fe(2+) and Zn(2+). Unaffected by Na(+), K(+) and Li(+). Functionally, catalyzes the formation of chlorobenzoyl-CoA via a 2 step reaction. First 4-chlorobenzoyl is adenylated by ATP, followed by acyl transfer from the 4-chlorobenzoyl-AMP intermediate to CoA. Benzoate, 4-bromobenzoate, 4-iodobenzoate and 4-methylbenzoate also act as substrates. Inactive towards 4-aminobenzoate, 4-hydroxybenzoate, 2-aminobenzoate, 2,3-dihydroxybenzoate, 4-coumarate and the aliphatic carboxylic acids palmate, caproate, laurate and butyrate. Negligible activity is detected when ATP is replaced by UTP, CTP or GTP as cosubstrate. This chain is 4-chlorobenzoate--CoA ligase, found in Pseudomonas sp. (strain CBS-3).